The chain runs to 410 residues: Lissencephaly-1 homolog (410 aa).

In terms of domain architecture, LisH spans 7 to 39 (QRDELNRAIADYLRSNGYEEAYSVFKKEAELDM). A coiled-coil region spans residues 56–82 (TSVIRLQKKVMELESKLNEAKEEFTSG). WD repeat units follow at residues 106–147 (GHRS…RTLK), 148–189 (GHTD…RTMH), 190–229 (GHDH…CVKT), 232–271 (GHRE…CKAE), 274–333 (EHEH…CLMT), 336–377 (GHDN…KTLN), and 379–410 (HEHF…WECR).

Belongs to the WD repeat LIS1/nudF family. Can self-associate. Component of the cytosolic PAF-AH (I) heterotetrameric enzyme, which is composed of PAFAH1B1 (beta), PAFAH1B2 (alpha2) and PAFAH1B3 (alpha1) subunits. The catalytic activity of the enzyme resides in the alpha1 (PAFAH1B3) and alpha2 (PAFAH1B2) subunits, whereas the beta subunit (PAFAH1B1) has regulatory activity. Trimer formation is not essential for the catalytic activity. Interacts with dynein, dynactin, nde1 and ndel1.

It is found in the cytoplasm. It localises to the cytoskeleton. The protein resides in the microtubule organizing center. The protein localises to the centrosome. Regulatory subunit (beta subunit) of the cytosolic type I platelet-activating factor (PAF) acetylhydrolase (PAF-AH (I)), an enzyme that catalyzes the hydrolyze of the acetyl group at the sn-2 position of PAF and its analogs and participates in PAF inactivation. Regulates the PAF-AH (I) activity in a catalytic dimer composition-dependent manner. Positively regulates the activity of the minus-end directed microtubule motor protein dynein. May enhance dynein-mediated microtubule sliding by targeting dynein to the microtubule plus end. Required for several dynein- and microtubule-dependent processes such as the maintenance of Golgi integrity, the peripheral transport of microtubule fragments and the coupling of the nucleus and centrosome. May be required for proliferation of neuronal precursors and neuronal migration. The protein is Lissencephaly-1 homolog (pafah1b1) of Xenopus laevis (African clawed frog).